An 88-amino-acid polypeptide reads, in one-letter code: Cell division topological specificity factor (88 aa).

It belongs to the MinE family.

Prevents the cell division inhibition by proteins MinC and MinD at internal division sites while permitting inhibition at polar sites. This ensures cell division at the proper site by restricting the formation of a division septum at the midpoint of the long axis of the cell. The sequence is that of Cell division topological specificity factor from Cronobacter sakazakii (strain ATCC BAA-894) (Enterobacter sakazakii).